A 477-amino-acid polypeptide reads, in one-letter code: Chaperonin GroEL 2 (477 aa).

Residues 29 to 32 (TLGP), 86 to 90 (DGTTT), and Gly-416 each bind ATP.

The protein belongs to the chaperonin (HSP60) family. In terms of assembly, forms a cylinder of 14 subunits composed of two heptameric rings stacked back-to-back. Interacts with the co-chaperonin GroES.

Its subcellular location is the cytoplasm. The catalysed reaction is ATP + H2O + a folded polypeptide = ADP + phosphate + an unfolded polypeptide.. Together with its co-chaperonin GroES, plays an essential role in assisting protein folding. The GroEL-GroES system forms a nano-cage that allows encapsulation of the non-native substrate proteins and provides a physical environment optimized to promote and accelerate protein folding. The polypeptide is Chaperonin GroEL 2 (Streptomyces lividans).